A 531-amino-acid chain; its full sequence is Dihydropyrimidinase (531 aa).

3 residues coordinate Zn(2+): histidine 103, histidine 105, and lysine 193. Lysine 193 is subject to N6-carboxylysine. Tyrosine 198 contributes to the substrate binding site. Zn(2+) contacts are provided by histidine 226 and histidine 282. A substrate-binding site is contributed by serine 332. Aspartate 359 is a Zn(2+) binding site. Position 380 (asparagine 380) interacts with substrate.

The protein belongs to the metallo-dependent hydrolases superfamily. Hydantoinase/dihydropyrimidinase family. Homotetramer. Zn(2+) is required as a cofactor. Carboxylation allows a single lysine to coordinate two zinc ions.

It is found in the endoplasmic reticulum. It carries out the reaction 5,6-dihydrouracil + H2O = 3-(carbamoylamino)propanoate + H(+). The protein operates within amino-acid biosynthesis; beta-alanine biosynthesis. Its function is as follows. Catalyzes the second step of the reductive pyrimidine degradation, the reversible hydrolytic ring opening of dihydropyrimidines. Can catalyze the ring opening of 5,6-dihydrouracil to N-carbamoyl-alanine and of 5,6-dihydrothymine to N-carbamoyl-amino isobutyrate. Involved in the recycling of nitrogen from nucleobases to general nitrogen metabolism. This Arabidopsis thaliana (Mouse-ear cress) protein is Dihydropyrimidinase.